A 113-amino-acid chain; its full sequence is Major basic nuclear protein 1 (113 aa).

The segment at 1–20 (MAPKMKAAMKAMKAPAMKGK) is disordered.

It is found in the nucleus. The sequence is that of Major basic nuclear protein 1 (HCc1) from Crypthecodinium cohnii (Dinoflagellate).